The following is a 369-amino-acid chain: Phenylalanine--tRNA ligase alpha subunit (369 aa).

Mg(2+) is bound at residue glutamate 270.

This sequence belongs to the class-II aminoacyl-tRNA synthetase family. Phe-tRNA synthetase alpha subunit type 1 subfamily. In terms of assembly, tetramer of two alpha and two beta subunits. Mg(2+) serves as cofactor.

The protein resides in the cytoplasm. The catalysed reaction is tRNA(Phe) + L-phenylalanine + ATP = L-phenylalanyl-tRNA(Phe) + AMP + diphosphate + H(+). This is Phenylalanine--tRNA ligase alpha subunit from Phenylobacterium zucineum (strain HLK1).